The following is a 132-amino-acid chain: Homeobox protein HD-4 (132 aa).

The homeobox DNA-binding region spans 29 to 88 (GLSGYRYKTHIQVYVLTKIFEITQYPSHDTRQNLAILLNMSPRTIQIWFQNSRSVSRGAA). Residues 82 to 101 (SVSRGAAKKKVSKDNGPQEA) are disordered.

It localises to the nucleus. The protein is Homeobox protein HD-4 (HD-4) of Encephalitozoon cuniculi (strain GB-M1) (Microsporidian parasite).